Consider the following 414-residue polypeptide: Multifunctional CCA protein (414 aa).

The ATP site is built by G8 and R11. CTP is bound by residues G8 and R11. D21 and D23 together coordinate Mg(2+). The ATP site is built by R91, R137, and R140. CTP is bound by residues R91, R137, and R140. The HD domain occupies 226–327 (TGVHVMMVVD…VTLFERCDAF (102 aa)).

This sequence belongs to the tRNA nucleotidyltransferase/poly(A) polymerase family. Bacterial CCA-adding enzyme type 1 subfamily. As to quaternary structure, monomer. Can also form homodimers and oligomers. Mg(2+) serves as cofactor. It depends on Ni(2+) as a cofactor.

It catalyses the reaction a tRNA precursor + 2 CTP + ATP = a tRNA with a 3' CCA end + 3 diphosphate. It carries out the reaction a tRNA with a 3' CCA end + 2 CTP + ATP = a tRNA with a 3' CCACCA end + 3 diphosphate. Its function is as follows. Catalyzes the addition and repair of the essential 3'-terminal CCA sequence in tRNAs without using a nucleic acid template. Adds these three nucleotides in the order of C, C, and A to the tRNA nucleotide-73, using CTP and ATP as substrates and producing inorganic pyrophosphate. tRNA 3'-terminal CCA addition is required both for tRNA processing and repair. Also involved in tRNA surveillance by mediating tandem CCA addition to generate a CCACCA at the 3' terminus of unstable tRNAs. While stable tRNAs receive only 3'-terminal CCA, unstable tRNAs are marked with CCACCA and rapidly degraded. The polypeptide is Multifunctional CCA protein (Herminiimonas arsenicoxydans).